We begin with the raw amino-acid sequence, 481 residues long: Trigger factor (481 aa).

The PPIase FKBP-type domain maps to 161–298; it reads GDQLTATVQT…VSEIQNRQLP (138 aa). The segment at 173–245 is disordered; the sequence is DGVPLHKLDE…PTTLIMEERR (73 aa). Over residues 182–235 the composition is skewed to acidic residues; it reads EEDDDDDDDDDDDDDDDDDDDDDDDDDDDDDDDDDDDDDDDDDDDDDDDDDEGE.

The protein belongs to the FKBP-type PPIase family. Tig subfamily.

The protein resides in the cytoplasm. The catalysed reaction is [protein]-peptidylproline (omega=180) = [protein]-peptidylproline (omega=0). Involved in protein export. Acts as a chaperone by maintaining the newly synthesized protein in an open conformation. Functions as a peptidyl-prolyl cis-trans isomerase. In Herpetosiphon aurantiacus (strain ATCC 23779 / DSM 785 / 114-95), this protein is Trigger factor.